The primary structure comprises 434 residues: Solute carrier RCH1 (434 aa).

Residues 1-15 are Cytoplasmic-facing; the sequence is MKTQYSLIRKIWAHS. The helical transmembrane segment at 16-36 threads the bilayer; that stretch reads VTEFLKSQWFFICLAILIVIA. Over 37 to 50 the chain is Extracellular; the sequence is RFAPNFARDGGLIK. A helical membrane pass occupies residues 51 to 71; sequence GQYSIGYGCVAWIFLQSGLGM. The Cytoplasmic segment spans residues 72–87; that stretch reads KSRSLMANMLNWRAHA. Residues 88-108 traverse the membrane as a helical segment; that stretch reads TILVLSFLITSSIVYGFCCAV. At 109–118 the chain is on the extracellular side; sequence KAANDPKIDD. The helical transmembrane segment at 119-139 threads the bilayer; the sequence is WVLIGLILTATCPTTVASNVI. The Cytoplasmic portion of the chain corresponds to 140 to 149; it reads MTTNAGGNSL. A helical transmembrane segment spans residues 150–170; sequence LCVCEVFIGNLLGAFITPALV. The Extracellular segment spans residues 171-199; sequence QMFTNRAPFAYGNPATGNGIGALYGRVMK. The chain crosses the membrane as a helical span at residues 200–220; it reads QVGLSVFVPLFVGQVIQNCFP. The Cytoplasmic portion of the chain corresponds to 221–234; it reads KGTAYYLGFLKKYH. Residues 235 to 255 traverse the membrane as a helical segment; it reads IKIGSYMLLLIMFSSFSTAFY. Topologically, residues 256 to 264 are extracellular; it reads QDAFTSVSH. The chain crosses the membrane as a helical span at residues 265-285; that stretch reads VCIIFLCFFNLGIYIFFTGLS. Residues 286 to 327 lie on the Cytoplasmic side of the membrane; it reads YLCARPWFILKLFPHEPIEGKSTRLYRYSYNIFRPFYYSKED. Residues 328–348 form a helical membrane-spanning segment; the sequence is AICIMFCGPAKTAALGVSLIT. Topologically, residues 349–362 are extracellular; it reads SQYGDKKEHLGKLL. A helical transmembrane segment spans residues 363–383; sequence VPLVLYQVEQVMTANFFVSLF. Topologically, residues 384–434 are cytoplasmic; the sequence is KRWIQKDAQADGSESSCANENEEVDLEKIISIGTGENQSVLSNNVPYTQPR. At Ser425 the chain carries Phosphoserine.

This sequence belongs to the bile acid:sodium symporter (BASS) (TC 2.A.28) family.

It is found in the cell membrane. The protein resides in the bud neck. Functionally, solute carrier protein that negatively regulates the cytosolic calcium homeostasis in response to high levels of extracellular calcium. This chain is Solute carrier RCH1, found in Saccharomyces cerevisiae (strain ATCC 204508 / S288c) (Baker's yeast).